Reading from the N-terminus, the 151-residue chain is Histone H2A.2.2 (151 aa).

The residue at position 1 (Met-1) is an N-acetylmethionine. The disordered stretch occupies residues 129 to 151 (EKAEKAGTKAKSPKKATKSPKKA). Residues 139 to 151 (KSPKKATKSPKKA) show a composition bias toward basic residues. 2 consecutive short sequence motifs (SPKK motif) follow at residues 140 to 143 (SPKK) and 147 to 150 (SPKK).

Belongs to the histone H2A family. As to quaternary structure, the nucleosome is a histone octamer containing two molecules each of H2A, H2B, H3 and H4 assembled in one H3-H4 heterotetramer and two H2A-H2B heterodimers. The octamer wraps approximately 147 bp of DNA. In terms of processing, phosphorylated within its C-terminal part, probably at the SPKK motifs.

The protein resides in the nucleus. It is found in the chromosome. Functionally, core component of nucleosome. Nucleosomes wrap and compact DNA into chromatin, limiting DNA accessibility to the cellular machineries which require DNA as a template. Histones thereby play a central role in transcription regulation, DNA repair, DNA replication and chromosomal stability. DNA accessibility is regulated via a complex set of post-translational modifications of histones, also called histone code, and nucleosome remodeling. The chain is Histone H2A.2.2 from Triticum aestivum (Wheat).